Consider the following 639-residue polypeptide: Chaperone protein DnaK (639 aa).

Threonine 198 is modified (phosphothreonine; by autocatalysis). The segment at 602 to 639 (QAKSQAQGGDNADAGKQANATADDVVDAEFEEVKDDKK) is disordered. The span at 625–639 (DVVDAEFEEVKDDKK) shows a compositional bias: acidic residues.

Belongs to the heat shock protein 70 family.

In terms of biological role, acts as a chaperone. The polypeptide is Chaperone protein DnaK (Shewanella baltica (strain OS195)).